The sequence spans 161 residues: PRS fimbrial major pilin protein (161 aa).

Belongs to the fimbrial protein family.

The protein localises to the secreted. Its subcellular location is the fimbrium. Its function is as follows. Fimbriae (also called pili), polar filaments radiating from the surface of the bacterium to a length of 0.5-1.5 micrometers and numbering 100-300 per cell, enable bacteria to colonize the epithelium of specific host organs. The protein is PRS fimbrial major pilin protein (prsA) of Escherichia coli.